Reading from the N-terminus, the 138-residue chain is Small ribosomal subunit protein uS8 (138 aa).

Belongs to the universal ribosomal protein uS8 family. Part of the 30S ribosomal subunit. Contacts proteins S5 and S12.

Functionally, one of the primary rRNA binding proteins, it binds directly to 16S rRNA central domain where it helps coordinate assembly of the platform of the 30S subunit. The sequence is that of Small ribosomal subunit protein uS8 (rpsH) from Thermus thermophilus (strain ATCC BAA-163 / DSM 7039 / HB27).